A 359-amino-acid chain; its full sequence is Spermine synthase (359 aa).

The 252-residue stretch at 53 to 304 (SGWFSEPHPR…GVIGFVLCST (252 aa)) folds into the PABS domain. An S-adenosyl 3-(methylsulfanyl)propylamine-binding site is contributed by Q99. Y129 lines the spermidine pocket. Q130 lines the S-adenosyl 3-(methylsulfanyl)propylamine pocket. D154 is a spermidine binding site. Residues E174 and 205-206 (DA) contribute to the S-adenosyl 3-(methylsulfanyl)propylamine site. Catalysis depends on D224, which acts as the Proton acceptor. Position 292 (Y292) interacts with putrescine.

This sequence belongs to the spermidine/spermine synthase family. As to quaternary structure, heterodimer. Component of a multiprotein complex. Interacts with SPDSYN1 and SPDSYN2. Expressed predominantly in stem internodes, flower buds and roots.

It carries out the reaction S-adenosyl 3-(methylsulfanyl)propylamine + spermidine = spermine + S-methyl-5'-thioadenosine + H(+). It participates in amine and polyamine biosynthesis; spermine biosynthesis; spermine from spermidine: step 1/1. The sequence is that of Spermine synthase (SPMS) from Arabidopsis thaliana (Mouse-ear cress).